The chain runs to 101 residues: Small ribosomal subunit protein uS14 (101 aa).

Residues 1–11 (MAKKSSVEKNN) are compositionally biased toward basic and acidic residues. A disordered region spans residues 1–22 (MAKKSSVEKNNRRQRMVKNAAA). Residues 12 to 22 (RRQRMVKNAAA) are compositionally biased toward basic residues.

It belongs to the universal ribosomal protein uS14 family. As to quaternary structure, part of the 30S ribosomal subunit. Contacts proteins S3 and S10.

Its function is as follows. Binds 16S rRNA, required for the assembly of 30S particles and may also be responsible for determining the conformation of the 16S rRNA at the A site. The protein is Small ribosomal subunit protein uS14 of Afipia carboxidovorans (strain ATCC 49405 / DSM 1227 / KCTC 32145 / OM5) (Oligotropha carboxidovorans).